We begin with the raw amino-acid sequence, 211 residues long: N-(5'-phosphoribosyl)anthranilate isomerase (211 aa).

It belongs to the TrpF family.

It carries out the reaction N-(5-phospho-beta-D-ribosyl)anthranilate = 1-(2-carboxyphenylamino)-1-deoxy-D-ribulose 5-phosphate. It participates in amino-acid biosynthesis; L-tryptophan biosynthesis; L-tryptophan from chorismate: step 3/5. This chain is N-(5'-phosphoribosyl)anthranilate isomerase, found in Zymomonas mobilis subsp. pomaceae (strain ATCC 29192 / DSM 22645 / JCM 10191 / CCUG 17912 / NBRC 13757 / NCIMB 11200 / NRRL B-4491 / Barker I).